Reading from the N-terminus, the 208-residue chain is Probable transcriptional regulator ycf29 (208 aa).

Residues K11–I118 form the Response regulatory domain. Position 60 is a 4-aspartylphosphate (D60). An HTH luxR-type domain is found at T146–N208.

Its subcellular location is the plastid. The protein localises to the chloroplast. The sequence is that of Probable transcriptional regulator ycf29 (ycf29) from Guillardia theta (Cryptophyte).